We begin with the raw amino-acid sequence, 171 residues long: Photosystem I assembly protein Ycf3 (171 aa).

3 TPR repeats span residues 35–68 (AFTYYRDGMSAQSEGEYAEALQNYYKAMRLEIDP), 72–105 (SYILYNIGLIHTSNGEHAKALEYYFQALERNPSL), and 120–153 (GEQAIQQGDPGTSEIWFDKAAEYWKQAIALAPNN).

The protein belongs to the Ycf3 family.

The protein localises to the plastid. Its subcellular location is the chloroplast thylakoid membrane. Its function is as follows. Essential for the assembly of the photosystem I (PSI) complex. May act as a chaperone-like factor to guide the assembly of the PSI subunits. The polypeptide is Photosystem I assembly protein Ycf3 (Psilotum nudum (Whisk fern)).